Reading from the N-terminus, the 399-residue chain is 4-hydroxy-3-methylbut-2-enyl diphosphate reductase (399 aa).

[4Fe-4S] cluster is bound at residue C66. Residue H96 coordinates (2E)-4-hydroxy-3-methylbut-2-enyl diphosphate. H96 is a binding site for dimethylallyl diphosphate. An isopentenyl diphosphate-binding site is contributed by H96. Residue C157 participates in [4Fe-4S] cluster binding. Residue H185 participates in (2E)-4-hydroxy-3-methylbut-2-enyl diphosphate binding. Residue H185 coordinates dimethylallyl diphosphate. H185 lines the isopentenyl diphosphate pocket. The Proton donor role is filled by E187. (2E)-4-hydroxy-3-methylbut-2-enyl diphosphate is bound at residue T250. C288 contacts [4Fe-4S] cluster. The (2E)-4-hydroxy-3-methylbut-2-enyl diphosphate site is built by S317, S318, N319, and S380. Dimethylallyl diphosphate-binding residues include S317, S318, N319, and S380. Positions 317, 318, 319, and 380 each coordinate isopentenyl diphosphate.

It belongs to the IspH family. Requires [4Fe-4S] cluster as cofactor.

The catalysed reaction is isopentenyl diphosphate + 2 oxidized [2Fe-2S]-[ferredoxin] + H2O = (2E)-4-hydroxy-3-methylbut-2-enyl diphosphate + 2 reduced [2Fe-2S]-[ferredoxin] + 2 H(+). It catalyses the reaction dimethylallyl diphosphate + 2 oxidized [2Fe-2S]-[ferredoxin] + H2O = (2E)-4-hydroxy-3-methylbut-2-enyl diphosphate + 2 reduced [2Fe-2S]-[ferredoxin] + 2 H(+). It participates in isoprenoid biosynthesis; dimethylallyl diphosphate biosynthesis; dimethylallyl diphosphate from (2E)-4-hydroxy-3-methylbutenyl diphosphate: step 1/1. It functions in the pathway isoprenoid biosynthesis; isopentenyl diphosphate biosynthesis via DXP pathway; isopentenyl diphosphate from 1-deoxy-D-xylulose 5-phosphate: step 6/6. Its function is as follows. Catalyzes the conversion of 1-hydroxy-2-methyl-2-(E)-butenyl 4-diphosphate (HMBPP) into a mixture of isopentenyl diphosphate (IPP) and dimethylallyl diphosphate (DMAPP). Acts in the terminal step of the DOXP/MEP pathway for isoprenoid precursor biosynthesis. The polypeptide is 4-hydroxy-3-methylbut-2-enyl diphosphate reductase (Synechococcus sp. (strain CC9902)).